The chain runs to 23 residues: Protein YqfH (23 aa).

The sequence is that of Protein YqfH from Escherichia coli (strain K12).